Consider the following 486-residue polypeptide: Ribosomal RNA small subunit methyltransferase F (486 aa).

S-adenosyl-L-methionine contacts are provided by residues 124-130, E148, D175, and D193; that span reads ASAPGSK. The active-site Nucleophile is the C246.

It belongs to the class I-like SAM-binding methyltransferase superfamily. RsmB/NOP family.

The protein localises to the cytoplasm. The catalysed reaction is cytidine(1407) in 16S rRNA + S-adenosyl-L-methionine = 5-methylcytidine(1407) in 16S rRNA + S-adenosyl-L-homocysteine + H(+). Functionally, specifically methylates the cytosine at position 1407 (m5C1407) of 16S rRNA. The protein is Ribosomal RNA small subunit methyltransferase F of Shewanella baltica (strain OS195).